The primary structure comprises 62 residues: Large ribosomal subunit protein uL30 (62 aa).

This sequence belongs to the universal ribosomal protein uL30 family. As to quaternary structure, part of the 50S ribosomal subunit.

This Shouchella clausii (strain KSM-K16) (Alkalihalobacillus clausii) protein is Large ribosomal subunit protein uL30.